Consider the following 79-residue polypeptide: MORN repeat-containing protein 2 (79 aa).

2 MORN repeats span residues 15 to 37 (YEGH…NGAK) and 38 to 60 (YTGN…QGLE).

The protein is MORN repeat-containing protein 2 (MORN2) of Bos taurus (Bovine).